Here is a 446-residue protein sequence, read N- to C-terminus: N-succinylarginine dihydrolase (446 aa).

Substrate is bound by residues 19 to 28 (AGLSFGNEAS), Asn-110, and 137 to 138 (HR). Glu-174 is a catalytic residue. A substrate-binding site is contributed by Arg-213. Residue His-249 is part of the active site. Residues Asp-251 and Asn-364 each contribute to the substrate site. Residue Cys-370 is the Nucleophile of the active site.

It belongs to the succinylarginine dihydrolase family. In terms of assembly, homodimer.

It catalyses the reaction N(2)-succinyl-L-arginine + 2 H2O + 2 H(+) = N(2)-succinyl-L-ornithine + 2 NH4(+) + CO2. Its pathway is amino-acid degradation; L-arginine degradation via AST pathway; L-glutamate and succinate from L-arginine: step 2/5. Functionally, catalyzes the hydrolysis of N(2)-succinylarginine into N(2)-succinylornithine, ammonia and CO(2). The polypeptide is N-succinylarginine dihydrolase (Acinetobacter baylyi (strain ATCC 33305 / BD413 / ADP1)).